We begin with the raw amino-acid sequence, 209 residues long: Uracil phosphoribosyltransferase (209 aa).

Residues Arg-79, Arg-104, and 131–139 (DPMLATGGS) contribute to the 5-phospho-alpha-D-ribose 1-diphosphate site. Residues Ile-194 and 199-201 (GDA) contribute to the uracil site. Asp-200 is a 5-phospho-alpha-D-ribose 1-diphosphate binding site.

It belongs to the UPRTase family. Mg(2+) serves as cofactor.

The catalysed reaction is UMP + diphosphate = 5-phospho-alpha-D-ribose 1-diphosphate + uracil. It functions in the pathway pyrimidine metabolism; UMP biosynthesis via salvage pathway; UMP from uracil: step 1/1. With respect to regulation, allosterically activated by GTP. Catalyzes the conversion of uracil and 5-phospho-alpha-D-ribose 1-diphosphate (PRPP) to UMP and diphosphate. This chain is Uracil phosphoribosyltransferase, found in Brevibacillus brevis (strain 47 / JCM 6285 / NBRC 100599).